The following is a 161-amino-acid chain: MPSFDTVSEANMVEVKNAVDQAGKEISTRFDFKGSDARVEQKDRDLTAYADSEFQLNQVLDVLTGKLVKRNVDVRFLDRGKIEKIGGDKVKQVIKIKNGIETEAAKKIVRIIKDSKMKVQASIQGDAVRVTGAKRDDLQAAMAMLRKEVADLPLEFNNFRD.

Belongs to the YajQ family.

Nucleotide-binding protein. In Janthinobacterium sp. (strain Marseille) (Minibacterium massiliensis), this protein is Nucleotide-binding protein mma_0840.